A 571-amino-acid chain; its full sequence is Proline--tRNA ligase (571 aa).

The protein belongs to the class-II aminoacyl-tRNA synthetase family. ProS type 1 subfamily. Homodimer.

It localises to the cytoplasm. It carries out the reaction tRNA(Pro) + L-proline + ATP = L-prolyl-tRNA(Pro) + AMP + diphosphate. In terms of biological role, catalyzes the attachment of proline to tRNA(Pro) in a two-step reaction: proline is first activated by ATP to form Pro-AMP and then transferred to the acceptor end of tRNA(Pro). As ProRS can inadvertently accommodate and process non-cognate amino acids such as alanine and cysteine, to avoid such errors it has two additional distinct editing activities against alanine. One activity is designated as 'pretransfer' editing and involves the tRNA(Pro)-independent hydrolysis of activated Ala-AMP. The other activity is designated 'posttransfer' editing and involves deacylation of mischarged Ala-tRNA(Pro). The misacylated Cys-tRNA(Pro) is not edited by ProRS. In Thermodesulfovibrio yellowstonii (strain ATCC 51303 / DSM 11347 / YP87), this protein is Proline--tRNA ligase.